We begin with the raw amino-acid sequence, 232 residues long: Thiamine import ATP-binding protein ThiQ (232 aa).

The 229-residue stretch at 2–230 (LKLTDITWLY…KGSASAIWGI (229 aa)) folds into the ABC transporter domain. 32-39 (GPSGAGKS) serves as a coordination point for ATP.

The protein belongs to the ABC transporter superfamily. Thiamine importer (TC 3.A.1.19.1) family. In terms of assembly, the complex is composed of two ATP-binding proteins (ThiQ), two transmembrane proteins (ThiP) and a solute-binding protein (ThiB).

The protein resides in the cell inner membrane. The enzyme catalyses thiamine(out) + ATP + H2O = thiamine(in) + ADP + phosphate + H(+). Its function is as follows. Part of the ABC transporter complex ThiBPQ involved in thiamine import. Responsible for energy coupling to the transport system. The polypeptide is Thiamine import ATP-binding protein ThiQ (Shigella flexneri).